The sequence spans 289 residues: tRNA pseudouridine synthase B (289 aa).

Asp-38 functions as the Nucleophile in the catalytic mechanism.

It belongs to the pseudouridine synthase TruB family. Type 1 subfamily.

It carries out the reaction uridine(55) in tRNA = pseudouridine(55) in tRNA. In terms of biological role, responsible for synthesis of pseudouridine from uracil-55 in the psi GC loop of transfer RNAs. This Acaryochloris marina (strain MBIC 11017) protein is tRNA pseudouridine synthase B.